Here is a 259-residue protein sequence, read N- to C-terminus: Ribosomal RNA small subunit methyltransferase J (259 aa).

S-adenosyl-L-methionine contacts are provided by residues 101–102 (RD), 117–118 (ER), 153–154 (SS), and aspartate 176.

This sequence belongs to the methyltransferase superfamily. RsmJ family.

Its subcellular location is the cytoplasm. It carries out the reaction guanosine(1516) in 16S rRNA + S-adenosyl-L-methionine = N(2)-methylguanosine(1516) in 16S rRNA + S-adenosyl-L-homocysteine + H(+). Specifically methylates the guanosine in position 1516 of 16S rRNA. The chain is Ribosomal RNA small subunit methyltransferase J from Aliivibrio fischeri (strain MJ11) (Vibrio fischeri).